Here is a 646-residue protein sequence, read N- to C-terminus: Stage V sporulation protein D (646 aa).

The Acyl-ester intermediate role is filled by S294. The region spanning 580–638 (DTKTIEVPNVVGMSVSDLESLLVNLNVDASGKGSKIVKQSPAAGTKVKEGSKIRVYLTE) is the PASTA domain.

This sequence belongs to the transpeptidase family.

It localises to the cell membrane. It catalyses the reaction Preferential cleavage: (Ac)2-L-Lys-D-Ala-|-D-Ala. Also transpeptidation of peptidyl-alanyl moieties that are N-acyl substituents of D-alanine.. It participates in cell wall biogenesis; peptidoglycan biosynthesis. Its function is as follows. Penicillin-binding protein with an unknown catalytic activity. May have a specialized role in the morphogenesis of spore cortex, which is a modified form of peptidoglycan. Spore cortex formation is determined primarily by the mother cell. The polypeptide is Stage V sporulation protein D (spoVD) (Bacillus subtilis (strain 168)).